A 356-amino-acid chain; its full sequence is Galectin-9C (356 aa).

In terms of domain architecture, Galectin 1 spans 17–148 (FSGTIQGGLQ…SVQLSYISFQ (132 aa)). 82–88 (WGPEERK) is an a beta-D-galactoside binding site. The tract at residues 170–190 (FPPRPRGRRQKPPSVRPANPA) is disordered. The Galectin 2 domain maps to 228 to 356 (FITTIPGGLY…GDIQLTHVQT (129 aa)). 288–294 (WGSEERS) is an a beta-D-galactoside binding site.

In terms of biological role, binds galactosides. This Homo sapiens (Human) protein is Galectin-9C (LGALS9C).